Reading from the N-terminus, the 87-residue chain is Small ribosomal subunit protein bS20 (87 aa).

Positions Met1–Ser26 are disordered.

This sequence belongs to the bacterial ribosomal protein bS20 family.

Binds directly to 16S ribosomal RNA. The polypeptide is Small ribosomal subunit protein bS20 (Salmonella gallinarum (strain 287/91 / NCTC 13346)).